Consider the following 288-residue polypeptide: Lipoyl synthase (288 aa).

[4Fe-4S] cluster is bound by residues C39, C44, C50, C65, C69, C72, and S276. Residues 51–265 enclose the Radical SAM core domain; the sequence is WGKGTATFMI…KETGLKKGFE (215 aa).

The protein belongs to the radical SAM superfamily. Lipoyl synthase family. Requires [4Fe-4S] cluster as cofactor.

The protein resides in the cytoplasm. The catalysed reaction is [[Fe-S] cluster scaffold protein carrying a second [4Fe-4S](2+) cluster] + N(6)-octanoyl-L-lysyl-[protein] + 2 oxidized [2Fe-2S]-[ferredoxin] + 2 S-adenosyl-L-methionine + 4 H(+) = [[Fe-S] cluster scaffold protein] + N(6)-[(R)-dihydrolipoyl]-L-lysyl-[protein] + 4 Fe(3+) + 2 hydrogen sulfide + 2 5'-deoxyadenosine + 2 L-methionine + 2 reduced [2Fe-2S]-[ferredoxin]. It functions in the pathway protein modification; protein lipoylation via endogenous pathway; protein N(6)-(lipoyl)lysine from octanoyl-[acyl-carrier-protein]: step 2/2. Functionally, catalyzes the radical-mediated insertion of two sulfur atoms into the C-6 and C-8 positions of the octanoyl moiety bound to the lipoyl domains of lipoate-dependent enzymes, thereby converting the octanoylated domains into lipoylated derivatives. The chain is Lipoyl synthase from Bacteroides fragilis (strain ATCC 25285 / DSM 2151 / CCUG 4856 / JCM 11019 / LMG 10263 / NCTC 9343 / Onslow / VPI 2553 / EN-2).